The sequence spans 387 residues: tRNA pseudouridine synthase B (387 aa).

The Nucleophile role is filled by D43.

The protein belongs to the pseudouridine synthase TruB family. Type 1 subfamily.

The enzyme catalyses uridine(55) in tRNA = pseudouridine(55) in tRNA. Responsible for synthesis of pseudouridine from uracil-55 in the psi GC loop of transfer RNAs. The polypeptide is tRNA pseudouridine synthase B (Bifidobacterium longum subsp. infantis (strain ATCC 15697 / DSM 20088 / JCM 1222 / NCTC 11817 / S12)).